Reading from the N-terminus, the 477-residue chain is D(1B) dopamine receptor (477 aa).

Topologically, residues 1–39 (MLPPGSNGTAYPGQFALYQQLAQGNAVGGSAGAPPLGPS) are extracellular. N-linked (GlcNAc...) asparagine glycosylation is present at Asn7. The chain crosses the membrane as a helical span at residues 40-66 (QVVTACLLTLLIIWTLLGNVLVCAAIV). Residues 67–77 (RSRHLRANMTN) are Cytoplasmic-facing. A helical transmembrane segment spans residues 78–104 (VFIVSLAVSDLFVALLVMPWKAVAEVA). Over 105–114 (GYWPFGAFCD) the chain is Extracellular. An intrachain disulfide couples Cys113 to Cys217. Residues 115–136 (VWVAFDIMCSTASILNLCVISV) form a helical membrane-spanning segment. At 137–158 (DRYWAISRPFRYKRKMTQRMAL) the chain is on the cytoplasmic side. A helical membrane pass occupies residues 159–180 (VMVGLAWTLSILISFIPVQLNW). Topologically, residues 181 to 223 (HRDQAASWGGLDLPNNLANWTPWEEDFWEPDVNAENCDSSLNR) are extracellular. N-linked (GlcNAc...) asparagine glycosylation occurs at Asn222. Residues 224 to 246 (TYAISSSLISFYIPVAIMIVTYT) form a helical membrane-spanning segment. The Cytoplasmic segment spans residues 247-296 (RIYRIAQVQIRRISSLERAAEHAQSCRSSAACAPDTSLRASIKKETKVLK). Residues 297–320 (TLSVIMGVFVCCWLPFFILNCMVP) form a helical membrane-spanning segment. Residues 321-340 (FCSGHPEGPPAGFPCVSETT) are Extracellular-facing. Residues 341–360 (FDVFVWFGWANSSLNPVIYA) form a helical membrane-spanning segment. Residues 361–477 (FNADFQKVFA…ITPFTPNGFH (117 aa)) lie on the Cytoplasmic side of the membrane. A lipid anchor (S-palmitoyl cysteine) is attached at Cys375.

Belongs to the G-protein coupled receptor 1 family. In terms of tissue distribution, neuron-specific, localized primarily within limbic regions of the brain.

The protein resides in the cell membrane. In terms of biological role, dopamine receptor whose activity is mediated by G proteins which activate adenylyl cyclase. This chain is D(1B) dopamine receptor (DRD5), found in Homo sapiens (Human).